A 299-amino-acid polypeptide reads, in one-letter code: Putative activator of 90 kDa heat shock protein ATPase homolog 2 (299 aa).

Belongs to the AHA1 family.

Functionally, co-chaperone that stimulates HSP90 ATPase activity. The sequence is that of Putative activator of 90 kDa heat shock protein ATPase homolog 2 from Homo sapiens (Human).